The chain runs to 568 residues: General O-oligosaccharyltransferase (568 aa).

The next 12 helical transmembrane spans lie at 17-37 (VAVMRFLLLLLTAVLISLAWL), 46-66 (LTFASEMLSFAAFLSLLALFL), 78-98 (LALPVVFIPMIQWGFGLVVDF), 101-121 (ALLSSAYLLGFWLTMLLGYNL), 132-152 (FTLSSYLLFAVALLTSLIACI), 176-196 (FAQPNNMSTFLILGLLGCLYL), 214-234 (IVFAITLSQSRTAWVFGLFFI), 251-271 (YAVLLWAIGFFAVGLLFPRFT), 349-369 (LLVWNGWLLGGLITICILIWI), 376-396 (AKTTESIIACLMVSAVWIHTL), 397-417 (LEYPLQYAYFLLPVGFLMGLI), and 429-449 (VPVSVIRSIWVIGIMLLALIW).

Belongs to the PglL O-oligosaccharyltransferase family.

It is found in the cell membrane. Its function is as follows. Catalyzes the O-glycosylation of multiple protein targets. Is responsible for general protein glycosylation within A.baylyi ADP1. Does not act as an O-antigen ligase. This chain is General O-oligosaccharyltransferase, found in Acinetobacter baylyi (strain ATCC 33305 / BD413 / ADP1).